Consider the following 118-residue polypeptide: Holo-[acyl-carrier-protein] synthase (118 aa).

Asp8 and Glu58 together coordinate Mg(2+).

This sequence belongs to the P-Pant transferase superfamily. AcpS family. It depends on Mg(2+) as a cofactor.

The protein resides in the cytoplasm. The catalysed reaction is apo-[ACP] + CoA = holo-[ACP] + adenosine 3',5'-bisphosphate + H(+). Its function is as follows. Transfers the 4'-phosphopantetheine moiety from coenzyme A to a Ser of acyl-carrier-protein. In Streptococcus pyogenes serotype M5 (strain Manfredo), this protein is Holo-[acyl-carrier-protein] synthase.